A 529-amino-acid polypeptide reads, in one-letter code: Delayed-rectifier potassium channel regulatory subunit KCNS1 (529 aa).

Residues 1 to 217 (MLMLLVRGTH…LTMENPGYSL (217 aa)) are Cytoplasmic-facing. The chain crosses the membrane as a helical span at residues 218–239 (PSKLFSCVSISVVLASIAAMCI). The Extracellular portion of the chain corresponds to 240–270 (HSLPEYQAREAAAAVAAVAAGRSPEGVRDDP). A helical membrane pass occupies residues 271-293 (VLRRLEYFCIAWFSFEVSSRLLL). Over 294 to 304 (APSTRNFFCHP) the chain is Cytoplasmic. A helical membrane pass occupies residues 305–322 (LNLIDIVSVLPFYLTLLA). At 323-340 (GVALGDQGGTGGKELGHL) the chain is on the extracellular side. The chain crosses the membrane as a helical; Voltage-sensor span at residues 341-361 (GKVVQVFRLMRIFRVLKLARH). Residues 362–376 (STGLRSLGATLKHSY) are Cytoplasmic-facing. A helical transmembrane segment spans residues 377 to 398 (REVGILLLYLAVGVSVFSGVAY). Residues 399 to 411 (TAEKEEDVGFNTI) lie on the Extracellular side of the membrane. Residues 412-423 (PACWWWGTVSMT) constitute an intramembrane region (helical). The Selectivity filter motif lies at 424 to 429 (TVGYGD). The stretch at 424-431 (TVGYGDVV) is an intramembrane region. The Extracellular segment spans residues 432–438 (PVTVAGK). A helical membrane pass occupies residues 439–467 (LAASGCILGGILVVALPITIIFNKFSHFY). Over 468 to 529 (RRQKALEAAV…PSEPPHPQMY (62 aa)) the chain is Cytoplasmic. A disordered region spans residues 494–529 (GVSEASLETSRETSQEGRSADLETQAPSEPPHPQMY). Over residues 502–514 (TSRETSQEGRSAD) the composition is skewed to basic and acidic residues.

This sequence belongs to the potassium channel family. S (TC 1.A.1.2) subfamily. Kv9.1/KCNS1 sub-subfamily. In terms of assembly, heterotetramer with KCNB1. Heterotetramer with KCNB2. Does not form homomultimers.

Its subcellular location is the cell membrane. Potassium channel regulatory subunit that modulate the delayed rectifier voltage-gated potassium channel activity of KCNB1 and KCNB2 by altering their kinetics, expression levels, and shifting the half-inactivation potential to more polarized values. While it does not form functional channels on its own, it can form functional heterotetrameric channels with KCNB1 and KCNB2. Each regulatory subunit has unique regulatory properties that can lead to extensive inhibition, significant changes in kinetics, and/or substantial shifts in the voltage dependencies of the inactivation process. The polypeptide is Delayed-rectifier potassium channel regulatory subunit KCNS1 (Chlorocebus aethiops (Green monkey)).